The chain runs to 384 residues: Cysteine desulfurase (384 aa).

Pyridoxal 5'-phosphate is bound by residues 74–75 (GT), N154, Q180, and 200–202 (SGH). K203 is subject to N6-(pyridoxal phosphate)lysine. A pyridoxal 5'-phosphate-binding site is contributed by T238. Residue C325 is the Cysteine persulfide intermediate of the active site. [2Fe-2S] cluster is bound at residue C325.

The protein belongs to the class-V pyridoxal-phosphate-dependent aminotransferase family. NifS/IscS subfamily. As to quaternary structure, homodimer. Requires pyridoxal 5'-phosphate as cofactor.

It catalyses the reaction (sulfur carrier)-H + L-cysteine = (sulfur carrier)-SH + L-alanine. In terms of biological role, catalyzes the removal of elemental sulfur atoms from cysteine to produce alanine. Seems to participate in the biosynthesis of the nitrogenase metalloclusters by providing the inorganic sulfur required for the Fe-S core formation. This is Cysteine desulfurase from Rhodobacter capsulatus (Rhodopseudomonas capsulata).